The following is a 154-amino-acid chain: Probable biofilm-surface layer protein B (154 aa).

An N-terminal signal peptide occupies residues 1–30 (MLKRTSFVSSLFISSAVLLSILLPSGQAHA).

Belongs to the BslA/BslB family. As to quaternary structure, monomer in vitro.

It localises to the secreted. Its function is as follows. Has a minor role in biofilm architecture. May contribute to the surface hydrophobicity. The protein is Probable biofilm-surface layer protein B of Bacillus subtilis (strain 168).